Consider the following 112-residue polypeptide: C-X-C motif chemokine 6 (112 aa).

The N-terminal stretch at 1–36 (MRLLSSRAARVSGPSGSLCALLALLLLTPPGPLASA) is a signal peptide. Cystine bridges form between Cys48-Cys74 and Cys50-Cys90.

This sequence belongs to the intercrine alpha (chemokine CxC) family.

The protein resides in the secreted. Functionally, chemotactic for neutrophil granulocytes. Signals through binding and activation of its receptors (CXCR1 and CXCR2). In addition to its chemotactic and angiogenic properties, it has strong antibacterial activity against Gram-positive and Gram-negative bacteria (90-fold-higher when compared to CXCL5 and CXCL7). This is C-X-C motif chemokine 6 (CXCL6) from Bos taurus (Bovine).